A 278-amino-acid chain; its full sequence is Sulfur carrier protein FdhD (278 aa).

The active-site Cysteine persulfide intermediate is Cys-121. A Mo-bis(molybdopterin guanine dinucleotide)-binding site is contributed by 260–265 (FCKPGR).

It belongs to the FdhD family.

The protein localises to the cytoplasm. Functionally, required for formate dehydrogenase (FDH) activity. Acts as a sulfur carrier protein that transfers sulfur from IscS to the molybdenum cofactor prior to its insertion into FDH. The sequence is that of Sulfur carrier protein FdhD from Salmonella typhi.